We begin with the raw amino-acid sequence, 876 residues long: Exonuclease mut-7 homolog (876 aa).

In terms of domain architecture, 3'-5' exonuclease spans 517–571 (GLSLLVQQVLGTALDKTQQLSNWDRRPLCEEQVIYAAADAYCLLEVHQALCREPA). Disordered regions lie at residues 578–607 (DLAG…APAA) and 751–781 (SHQE…AAPE).

Belongs to the mut-7 family. It depends on Mg(2+) as a cofactor.

Its function is as follows. Possesses 3'-5' exoribonuclease activity. Required for 3'-end trimming of AGO1-bound miRNAs. The protein is Exonuclease mut-7 homolog (EXD3) of Homo sapiens (Human).